The following is a 236-amino-acid chain: MQTHNNVDPQEIAKFEKMAATWWDPKGEFKPLHNLNPLRLNYIDQTAGGIFGKQVLDVGCGGGILSESMARIGANVTGLDMGDEPLDVARLHALETGVEINYIKNTAEAHRDEHRGQYDVVTCMEMLEHVPNPSSVIQACADMVKPGGYVFFSTINRNLRAYVETILGAEYLLKMLPIGTHDHNKFIRPSELIDLADNAELFCKDAVGITYNPITDIFRYTKSLEVNYMIATVKND.

Residues Arg-39, Gly-59, Asp-80, and Met-124 each coordinate S-adenosyl-L-methionine.

It belongs to the methyltransferase superfamily. UbiG/COQ3 family.

The catalysed reaction is a 3-demethylubiquinol + S-adenosyl-L-methionine = a ubiquinol + S-adenosyl-L-homocysteine + H(+). It carries out the reaction a 3-(all-trans-polyprenyl)benzene-1,2-diol + S-adenosyl-L-methionine = a 2-methoxy-6-(all-trans-polyprenyl)phenol + S-adenosyl-L-homocysteine + H(+). It functions in the pathway cofactor biosynthesis; ubiquinone biosynthesis. Functionally, O-methyltransferase that catalyzes the 2 O-methylation steps in the ubiquinone biosynthetic pathway. This chain is Ubiquinone biosynthesis O-methyltransferase, found in Shewanella pealeana (strain ATCC 700345 / ANG-SQ1).